Here is a 142-residue protein sequence, read N- to C-terminus: MTIFIGSDVAGQRLKDVVKTFLKENNHDVVDVTEGKELDFVDSTLAVVHEVQKNDDNLGIAVDAYGAGSFIVATKVKGMIAAEVSDERSAYMTRSHNNACMITMGSEIVGDTLAKNIAKEFVNGHYDGGRHQIRVDMLNKMC.

The protein belongs to the LacAB/RpiB family. Heteromultimeric protein consisting of LacA and LacB.

The catalysed reaction is aldehydo-D-galactose 6-phosphate = keto-D-tagatose 6-phosphate. It participates in carbohydrate metabolism; D-galactose 6-phosphate degradation; D-tagatose 6-phosphate from D-galactose 6-phosphate: step 1/1. This Staphylococcus haemolyticus (strain JCSC1435) protein is Galactose-6-phosphate isomerase subunit LacA.